The primary structure comprises 520 residues: UDP-N-acetylmuramoyl-L-alanyl-D-glutamate--2,6-diaminopimelate ligase (520 aa).

Leucine 48 contacts UDP-N-acetyl-alpha-D-muramoyl-L-alanyl-D-glutamate. Position 134–140 (134–140) interacts with ATP; the sequence is GTSGKTT. UDP-N-acetyl-alpha-D-muramoyl-L-alanyl-D-glutamate contacts are provided by residues 176–177, serine 203, and arginine 211; that span reads TT. Lysine 243 carries the post-translational modification N6-carboxylysine. Meso-2,6-diaminopimelate is bound by residues arginine 405, 429–432, glycine 483, and glutamate 487; that span reads DNPR. A Meso-diaminopimelate recognition motif motif is present at residues 429 to 432; that stretch reads DNPR.

It belongs to the MurCDEF family. MurE subfamily. Mg(2+) is required as a cofactor. Carboxylation is probably crucial for Mg(2+) binding and, consequently, for the gamma-phosphate positioning of ATP.

The protein localises to the cytoplasm. The enzyme catalyses UDP-N-acetyl-alpha-D-muramoyl-L-alanyl-D-glutamate + meso-2,6-diaminopimelate + ATP = UDP-N-acetyl-alpha-D-muramoyl-L-alanyl-gamma-D-glutamyl-meso-2,6-diaminopimelate + ADP + phosphate + H(+). Its pathway is cell wall biogenesis; peptidoglycan biosynthesis. Its function is as follows. Catalyzes the addition of meso-diaminopimelic acid to the nucleotide precursor UDP-N-acetylmuramoyl-L-alanyl-D-glutamate (UMAG) in the biosynthesis of bacterial cell-wall peptidoglycan. The protein is UDP-N-acetylmuramoyl-L-alanyl-D-glutamate--2,6-diaminopimelate ligase of Mycobacterium avium (strain 104).